Consider the following 448-residue polypeptide: Charged multivesicular body protein 7 (448 aa).

Over residues M1–A12 the composition is skewed to pro residues. Positions M1 to E20 are disordered. The stretch at Q241–E392 forms a coiled coil.

The protein belongs to the SNF7 family.

It localises to the cytoplasm. It is found in the nucleus envelope. Its function is as follows. ESCRT-III-like protein required to recruit the ESCRT-III complex to the nuclear envelope (NE) during late anaphase. Together with SPAST, the ESCRT-III complex promotes NE sealing and mitotic spindle disassembly during late anaphase. Recruited to the reforming NE during anaphase by LEMD2. Plays a role in the endosomal sorting pathway. In Gallus gallus (Chicken), this protein is Charged multivesicular body protein 7 (CHMP7).